We begin with the raw amino-acid sequence, 246 residues long: Anionic trypsin-2 (246 aa).

Residues 1 to 15 (MSALLILALVGAAVA) form the signal peptide. The propeptide at 16 to 23 (FPVDDDDK) is activation peptide. Residues 24–244 (IVGGYTCRES…YVDWIQNTIA (221 aa)) form the Peptidase S1 domain. Cystine bridges form between Cys30–Cys160, Cys48–Cys64, Cys132–Cys233, Cys139–Cys206, Cys171–Cys185, and Cys196–Cys220. His63 functions as the Charge relay system in the catalytic mechanism. Positions 75, 77, 80, and 85 each coordinate Ca(2+). The Charge relay system role is filled by Asp107. Residue Ser200 is the Charge relay system of the active site.

It belongs to the peptidase S1 family. It depends on Ca(2+) as a cofactor. Expressed in the pancreas, lung and kidney.

The protein resides in the secreted. It is found in the extracellular space. The enzyme catalyses Preferential cleavage: Arg-|-Xaa, Lys-|-Xaa.. The sequence is that of Anionic trypsin-2 (Prss2) from Mus musculus (Mouse).